The chain runs to 264 residues: Thymidylate synthase (264 aa).

Position 21 (R21) interacts with dUMP. H51 contributes to the (6R)-5,10-methylene-5,6,7,8-tetrahydrofolate binding site. 126–127 (RR) serves as a coordination point for dUMP. C146 acts as the Nucleophile in catalysis. DUMP contacts are provided by residues 166–169 (RSCD), N177, and 207–209 (HLY). Position 169 (D169) interacts with (6R)-5,10-methylene-5,6,7,8-tetrahydrofolate. A263 lines the (6R)-5,10-methylene-5,6,7,8-tetrahydrofolate pocket.

It belongs to the thymidylate synthase family. Bacterial-type ThyA subfamily. In terms of assembly, homodimer.

Its subcellular location is the cytoplasm. The enzyme catalyses dUMP + (6R)-5,10-methylene-5,6,7,8-tetrahydrofolate = 7,8-dihydrofolate + dTMP. Its pathway is pyrimidine metabolism; dTTP biosynthesis. In terms of biological role, catalyzes the reductive methylation of 2'-deoxyuridine-5'-monophosphate (dUMP) to 2'-deoxythymidine-5'-monophosphate (dTMP) while utilizing 5,10-methylenetetrahydrofolate (mTHF) as the methyl donor and reductant in the reaction, yielding dihydrofolate (DHF) as a by-product. This enzymatic reaction provides an intracellular de novo source of dTMP, an essential precursor for DNA biosynthesis. The protein is Thymidylate synthase of Baumannia cicadellinicola subsp. Homalodisca coagulata.